We begin with the raw amino-acid sequence, 488 residues long: Glutamyl-tRNA(Gln) amidotransferase subunit A (488 aa).

Active-site charge relay system residues include Lys77 and Ser152. The Acyl-ester intermediate role is filled by Ser176.

It belongs to the amidase family. GatA subfamily. As to quaternary structure, heterotrimer of A, B and C subunits.

It catalyses the reaction L-glutamyl-tRNA(Gln) + L-glutamine + ATP + H2O = L-glutaminyl-tRNA(Gln) + L-glutamate + ADP + phosphate + H(+). In terms of biological role, allows the formation of correctly charged Gln-tRNA(Gln) through the transamidation of misacylated Glu-tRNA(Gln) in organisms which lack glutaminyl-tRNA synthetase. The reaction takes place in the presence of glutamine and ATP through an activated gamma-phospho-Glu-tRNA(Gln). This Streptococcus uberis (strain ATCC BAA-854 / 0140J) protein is Glutamyl-tRNA(Gln) amidotransferase subunit A.